The following is a 133-amino-acid chain: MQLFVRAQELHTFEVTGQETVAQIKAHVASLEGIAPEDQVVLLAGAPLEDEATLGQCGVEALTTLEVAGRMLGGKVHGSLARAGKVRGQTPKVAKQEKKKKKTGRAKRRMQYNRRFVNVVPTFGKKKGPNANS.

Positions 1 to 74 (MQLFVRAQEL…LEVAGRMLGG (74 aa)) constitute a Ubiquitin-like domain. The segment at 84–110 (GKVRGQTPKVAKQEKKKKKTGRAKRRM) is disordered. Residues 97–110 (EKKKKKTGRAKRRM) show a composition bias toward basic residues. Lys-125 carries the post-translational modification N6-succinyllysine.

This sequence in the N-terminal section; belongs to the ubiquitin family. In the C-terminal section; belongs to the eukaryotic ribosomal protein eS30 family. In terms of assembly, component of the 40S subunit of the ribosome. FUBI is cleaved from ribosomal protein S30 by the deubiquitinase USP36 before the assembly of ribosomal protein S30 into pre-40S ribosomal particles. FUBI removal from ribosomal protein S30 is a crucial event for the final maturation of pre-40S particles.

Its subcellular location is the cytoplasm. It is found in the nucleus. In terms of biological role, may have pro-apoptotic activity. Functionally, component of the 40S subunit of the ribosome. Contributes to the assembly and function of 40S ribosomal subunits. The protein is Ubiquitin-like FUBI-ribosomal protein eS30 fusion protein of Homo sapiens (Human).